A 462-amino-acid chain; its full sequence is Glycine--tRNA ligase (462 aa).

Substrate contacts are provided by Arg-100 and Glu-174. ATP is bound by residues 206 to 208 (RNE), 216 to 221 (FRTREF), 290 to 291 (EL), and 334 to 337 (GADR). 221–225 (FEQME) provides a ligand contact to substrate. A substrate-binding site is contributed by 330–334 (EPSLG).

This sequence belongs to the class-II aminoacyl-tRNA synthetase family. In terms of assembly, homodimer.

It is found in the cytoplasm. It carries out the reaction tRNA(Gly) + glycine + ATP = glycyl-tRNA(Gly) + AMP + diphosphate. Catalyzes the attachment of glycine to tRNA(Gly). In Alkaliphilus metalliredigens (strain QYMF), this protein is Glycine--tRNA ligase.